The sequence spans 619 residues: (-)-camphene synthase, chloroplastic (619 aa).

A chloroplast-targeting transit peptide spans 1-47 (MALVSVAPLVSMRRSLFSSPYELKSIDKTIPNLVMCRKRMSGTPSIR). Residues Asp-370, Asp-374, and Asp-522 each contribute to the Mg(2+) site. The short motif at 370-374 (DDIYD) is the DDXXD motif element.

Belongs to the terpene synthase family. Tpsd subfamily. Mg(2+) is required as a cofactor. Mn(2+) serves as cofactor.

The protein resides in the plastid. The protein localises to the chloroplast. The enzyme catalyses (2E)-geranyl diphosphate = (1S,4R)-camphene + diphosphate. It catalyses the reaction (2E)-geranyl diphosphate = (1R,5R)-alpha-pinene + diphosphate. It carries out the reaction (2E)-geranyl diphosphate = tricyclene + diphosphate. The catalysed reaction is (2E)-geranyl diphosphate = beta-myrcene + diphosphate. The enzyme catalyses (2E)-geranyl diphosphate = (1S,5S)-beta-pinene + diphosphate. It catalyses the reaction (2E)-geranyl diphosphate = (1S,5S)-alpha-pinene + diphosphate. The protein operates within terpene metabolism; oleoresin biosynthesis. Its pathway is secondary metabolite biosynthesis; terpenoid biosynthesis. Its function is as follows. Monoterpene synthase (TPS) involved in the biosynthesis of monoterpene natural products included in conifer oleoresin secretions and volatile emissions; these compounds contribute to biotic and abiotic stress defense against herbivores and pathogens. Catalyzes the conversion of (2E)-geranyl diphosphate (GPP) to (-)-camphene, (+)-alpha-pinene and (-)-alpha-pinene, and, to a lower extent, to tricyclene, myrcene and (-)-beta-pinene. This is (-)-camphene synthase, chloroplastic from Pinus contorta (Shore pine).